The following is a 682-amino-acid chain: Solute carrier organic anion transporter family member 2B1 (682 aa).

The disordered stretch occupies residues 1–30; the sequence is MPDRSTKATMGAEDIHERKVSMEPRDSHQD. The Cytoplasmic portion of the chain corresponds to 1 to 41; that stretch reads MPDRSTKATMGAEDIHERKVSMEPRDSHQDAQPRGMFQNIK. A compositionally biased stretch (basic and acidic residues) spans 13 to 30; that stretch reads EDIHERKVSMEPRDSHQD. At serine 21 the chain carries Phosphoserine. The helical transmembrane segment at 42–61 threads the bilayer; it reads FFVLCHSILQLAQLMISGYL. Topologically, residues 62-80 are extracellular; it reads KSSISTVEKRFGLSSQTSG. The helical transmembrane segment at 81–101 threads the bilayer; the sequence is LLAAFNEVGNISLILFVSYFG. The Cytoplasmic segment spans residues 102–107; it reads SRVHRP. Residues 108–132 traverse the membrane as a helical segment; it reads RMIGCGAILVAVAGLLMALPHFISE. Over 133 to 176 the chain is Extracellular; it reads PYRYDHSSPDRSQDFEASLCLPTTMAPASALSNDSCSSRTETKH. An N-linked (GlcNAc...) asparagine glycan is attached at asparagine 165. The helical transmembrane segment at 177–206 threads the bilayer; that stretch reads LTMVGIMFTAQTLLGIGGVPIQPFGISYID. Topologically, residues 207 to 225 are cytoplasmic; the sequence is DFAHHSNSPLYLGILFAIT. Residues 226-246 form a helical membrane-spanning segment; it reads MMGPGLAYGLGSLMLRLYVDI. Residues 247–264 lie on the Extracellular side of the membrane; it reads DRMPEGGINLTTKDPRWV. Asparagine 255 carries an N-linked (GlcNAc...) asparagine glycan. Residues 265 to 289 traverse the membrane as a helical segment; the sequence is GAWWLGFLISAGLVVLAASPYFFFP. The Cytoplasmic segment spans residues 290-354; the sequence is REMPKEKYEL…IKVFPRVLLR (65 aa). 2 positions are modified to phosphoserine: serine 311 and serine 314. Residues 355–376 form a helical membrane-spanning segment; the sequence is TLRHPIFLLVVLSQVCTSSMVA. Over 377-396 the chain is Extracellular; it reads GTATFLPKFLERQFSITASF. The chain crosses the membrane as a helical span at residues 397–420; the sequence is ANLLLGCLTIPLAIVGIVVGGVLV. Over 421–424 the chain is Cytoplasmic; it reads KRLH. The chain crosses the membrane as a helical span at residues 425–448; the sequence is LSPMQCSALCLLGSLLCLLLSLPL. Residues 449–552 lie on the Extracellular side of the membrane; it reads FFIGCSTHHI…SACSRLVLPF (104 aa). The Kazal-like domain maps to 471-531; it reads PSLFPGCSEP…VFYTNCSCVA (61 aa). Cystine bridges form between cysteine 477–cysteine 508, cysteine 483–cysteine 504, and cysteine 492–cysteine 529. Asparagine 526 and asparagine 533 each carry an N-linked (GlcNAc...) asparagine glycan. The helical transmembrane segment at 553 to 575 threads the bilayer; the sequence is ILLISLGAAVASITHTPSFMLIL. Topologically, residues 576–584 are cytoplasmic; the sequence is RGVKKEDKT. A helical transmembrane segment spans residues 585–610; that stretch reads LAVGMQFMLLRVLAWMPSPVIHGSAI. The Extracellular portion of the chain corresponds to 611 to 643; sequence DTTCVHWALTCGRRAVCRYYDHDLLRNRFIGLQ. Residues 644-661 traverse the membrane as a helical segment; it reads FFFKSGSLVCFALVLAIL. The Cytoplasmic segment spans residues 662–682; sequence RQQSREASTKATVKSSDLQEL.

The protein belongs to the organo anion transporter (TC 2.A.60) family. In terms of tissue distribution, expressed in liver, kidney, heart, lung and retina. Widely distributed in all brain regions.

It is found in the cell membrane. Its subcellular location is the basal cell membrane. The protein resides in the apical cell membrane. The enzyme catalyses coproporphyrin III(out) = coproporphyrin III(in). It catalyses the reaction substance P(out) = substance P(in). It carries out the reaction taurocholate(out) = taurocholate(in). The catalysed reaction is prostaglandin E1(out) = prostaglandin E1(in). The enzyme catalyses prostaglandin E2(out) = prostaglandin E2(in). It catalyses the reaction prostaglandin D2(out) = prostaglandin D2(in). It carries out the reaction leukotriene C4(out) = leukotriene C4(in). The catalysed reaction is L-thyroxine(out) = L-thyroxine(in). In terms of biological role, mediates the Na(+)-independent transport of organic anions such as taurocholate, the prostaglandins D2 (PGD2), E1 (PGE1) and E2 (PGE2), leukotriene C4, thromboxane B2 and L-thyroxine. Also plays a role in the reuptake of neuropeptides such as substance P/TAC1 and vasoactive intestinal peptide/VIP released from retinal neurons. May act as a heme transporter that promotes cellular iron availability. Also transports heme by-product coproporphyrin III (CPIII), and may be involved in their hepatic disposition. May contribute to regulate the transport of organic compounds in testis across the blood-testis-barrier. Shows a pH-sensitive substrate specificity which may be ascribed to the protonation state of the binding site and leads to a stimulation of substrate transport in an acidic microenvironment. The exact transport mechanism has not been yet deciphered but most likely involves an anion exchange, coupling the cellular uptake of organic substrate with the efflux of an anionic compound. Hydrogencarbonate/HCO3(-) acts as a probable counteranion that exchanges for organic anions. Cytoplasmic glutamate may also act as counteranion in the placenta. This chain is Solute carrier organic anion transporter family member 2B1, found in Rattus norvegicus (Rat).